Consider the following 76-residue polypeptide: Attractin (76 aa).

The first 18 residues, 1–18 (MKVAIIILSLALVAAVFA), serve as a signal peptide directing secretion. 3 disulfides stabilise this stretch: C22/C59, C31/C51, and C38/C44. N26 carries an N-linked (GlcNAc...) asparagine glycan.

Binds to temptin and enticin. Produced by the albumen gland of the egg cordons.

Its subcellular location is the secreted. In terms of biological role, water-borne pheromone that attract the marine mollusk Aplysia into breeding aggregations and coordinate male and female reproductive behavior within the aggregation. The sequence is that of Attractin (ATT) from Aplysia californica (California sea hare).